The chain runs to 305 residues: Probable aspartoacylase (305 aa).

Zn(2+)-binding residues include H13 and E16. Residues R55 and 62–63 (NR) contribute to the substrate site. H105 contacts Zn(2+). Residues E163 and Y273 each contribute to the substrate site.

This sequence belongs to the AspA/AstE family. Aspartoacylase subfamily. The cofactor is Zn(2+).

It carries out the reaction an N-acyl-L-aspartate + H2O = a carboxylate + L-aspartate. The protein is Probable aspartoacylase of Prochlorococcus marinus (strain NATL1A).